We begin with the raw amino-acid sequence, 444 residues long: MSLAKLRTHYTADVKPEKVDNGQKITLAGWVHEVRDLGGICFVVLRDREGKAQVTLVKKKIDKELFDAARRLVRESVISVTGSVKFEEKAPNGYELLPEEITVLNVANSPLPMDTTGKVEAELDTRLDSRFIDLRRAETTAVFKIRHQALQATREYFVQNGFIETATPKVVATATEGGTALFPITYFDREAFLNQSPQLFKQILMSGGFDRVFEIGPIFRAEEHDTRRHLNEATSIDVEVSFADHFDVMEILENLVAYVYAQVIEKCKPSLETLGIELKVPKTPFLKLTYNEVIEIINARSEEKMHWGDDLGTFGEHIVGNYVYETTGESHYFIIDWPTEIKPFYAMPYEDRPEYSKSFDMMHRTMELSSGAQRIHIPDLLKSRIESQGLNPEGFEFYLKAFEYGMPPHAGWGMGCERFIMTMLGTENIRDTVLFPRDRRRLSP.

L-aspartate is bound at residue glutamate 176. The aspartate stretch occupies residues glutamine 198–lysine 201. Arginine 220 contributes to the L-aspartate binding site. Residues arginine 220–glutamate 222, arginine 228–leucine 230, and glutamate 367 contribute to the ATP site. Positions 367 and 370 each coordinate Mg(2+). L-aspartate-binding residues include serine 370 and arginine 374. Glycine 415–arginine 418 lines the ATP pocket.

This sequence belongs to the class-II aminoacyl-tRNA synthetase family. Type 2 subfamily. Homodimer. It depends on Mg(2+) as a cofactor.

It localises to the cytoplasm. The enzyme catalyses tRNA(Asx) + L-aspartate + ATP = L-aspartyl-tRNA(Asx) + AMP + diphosphate. In terms of biological role, aspartyl-tRNA synthetase with relaxed tRNA specificity since it is able to aspartylate not only its cognate tRNA(Asp) but also tRNA(Asn). Reaction proceeds in two steps: L-aspartate is first activated by ATP to form Asp-AMP and then transferred to the acceptor end of tRNA(Asp/Asn). The protein is Aspartate--tRNA(Asp/Asn) ligase of Methanosarcina barkeri (strain Fusaro / DSM 804).